The chain runs to 77 residues: Omega-conotoxin TxVII (77 aa).

A signal peptide spans 1-22 (MKLTCMMIVAVLFLTAWTFATA). Residues 23–49 (DDSGNGLENLFPKAHHEMKNPEASKLN) constitute a propeptide that is removed on maturation. 3 disulfides stabilise this stretch: C52/C67, C59/C71, and C66/C75.

In terms of tissue distribution, expressed by the venom duct.

The protein resides in the secreted. Omega-conotoxins act at presynaptic membranes, they bind and block voltage-gated calcium channels (Cav). Specifically acts on L-type channels. It blocks molluscan dihydropyridine-sensitive calcium channels. The sequence is that of Omega-conotoxin TxVII from Conus textile (Cloth-of-gold cone).